The sequence spans 1211 residues: RNA helicase Mov10l1 (1211 aa).

Disordered stretches follow at residues 340–385 (KENS…GENG) and 674–710 (WNHA…RVGD). 2 stretches are compositionally biased toward polar residues: residues 345–372 (DENI…NNRG) and 674–688 (WNHA…QSTS). Basic and acidic residues predominate over residues 694–710 (TMTDQAEHGTEERRVGD). 770–777 (GPPGTGKT) lines the ATP pocket. A DEAG box motif is present at residues 886–889 (DEAG). Residues 1192–1211 (DPSYPVVPESTGPEKHQEPS) form a disordered region.

This sequence belongs to the DNA2/NAM7 helicase family. SDE3 subfamily. In terms of assembly, interacts with PIWIL1. Interacts with PIWIL2. Interacts with PIWIL4. Interacts with HSPA2. Interacts with PLD6. Specifically expressed in testis.

It localises to the cytoplasm. The catalysed reaction is ATP + H2O = ADP + phosphate + H(+). ATP-dependent RNA helicase required during spermatogenesis to repress transposable elements and prevent their mobilization, which is essential for germline integrity. Acts via the piRNA metabolic process, which mediates the repression of transposable elements during meiosis by forming complexes composed of piRNAs and Piwi proteins and governs the methylation and subsequent repression of transposons. Involved in the primary piRNA metabolic process. Specifically binds to piRNA precursors and promotes the generation of intermediate piRNA processing fragments that are subsequently loaded to Piwi proteins. Acts via its ATP-dependent RNA helicase activity: displays 5'-3' RNA unwinding activity and probably mediates unwinding and funneling of single-stranded piRNA precursor transcripts to the endonuclease that catalyzes the first cleavage step of piRNA processing to generate piRNA intermediate fragments that are subsequently loaded to Piwi proteins. In Homo sapiens (Human), this protein is RNA helicase Mov10l1.